The following is a 236-amino-acid chain: Phycocyanobilin:ferredoxin oxidoreductase (236 aa).

It belongs to the HY2 family.

It catalyses the reaction (2R,3Z)-phycocyanobilin + 4 oxidized [2Fe-2S]-[ferredoxin] = biliverdin IXalpha + 4 reduced [2Fe-2S]-[ferredoxin] + 4 H(+). In terms of biological role, catalyzes the four-electron reduction of biliverdin IX-alpha (2-electron reduction at both the A and D rings); the reaction proceeds via an isolatable 2-electron intermediate, 181,182-dihydrobiliverdin. This Thermosynechococcus vestitus (strain NIES-2133 / IAM M-273 / BP-1) protein is Phycocyanobilin:ferredoxin oxidoreductase (pcyA).